Consider the following 230-residue polypeptide: Ureidoacrylate amidohydrolase RutB (230 aa).

Residue aspartate 24 is the Proton acceptor of the active site. The active site involves lysine 133. Residue cysteine 166 is the Nucleophile of the active site.

Belongs to the isochorismatase family. RutB subfamily.

It carries out the reaction (Z)-3-ureidoacrylate + H2O + H(+) = (Z)-3-aminoacrylate + NH4(+) + CO2. It catalyses the reaction (Z)-3-ureidoacrylate + H2O = (Z)-3-aminoacrylate + carbamate + H(+). The enzyme catalyses (Z)-2-methylureidoacrylate + H2O + H(+) = (Z)-2-methylaminoacrylate + NH4(+) + CO2. Hydrolyzes ureidoacrylate to form aminoacrylate and carbamate. The carbamate hydrolyzes spontaneously, thereby releasing one of the nitrogen atoms of the pyrimidine ring as ammonia and one of its carbon atoms as CO2. The protein is Ureidoacrylate amidohydrolase RutB of Escherichia coli O81 (strain ED1a).